A 371-amino-acid chain; its full sequence is Large ribosomal subunit protein bL27m (371 aa).

A mitochondrion-targeting transit peptide spans 1–27 (MWNPILLDTSSFSFQKHVSGVFLQVRN).

Belongs to the bacterial ribosomal protein bL27 family. Component of the mitochondrial large ribosomal subunit (mt-LSU). Mature yeast 74S mitochondrial ribosomes consist of a small (37S) and a large (54S) subunit. The 37S small subunit contains a 15S ribosomal RNA (15S mt-rRNA) and 34 different proteins. The 54S large subunit contains a 21S rRNA (21S mt-rRNA) and 46 different proteins.

The protein localises to the mitochondrion. Component of the mitochondrial ribosome (mitoribosome), a dedicated translation machinery responsible for the synthesis of mitochondrial genome-encoded proteins, including at least some of the essential transmembrane subunits of the mitochondrial respiratory chain. The mitoribosomes are attached to the mitochondrial inner membrane and translation products are cotranslationally integrated into the membrane. The polypeptide is Large ribosomal subunit protein bL27m (MRP7) (Saccharomyces cerevisiae (strain ATCC 204508 / S288c) (Baker's yeast)).